Consider the following 124-residue polypeptide: Large ribosomal subunit protein eL31 (124 aa).

The protein belongs to the eukaryotic ribosomal protein eL31 family.

The sequence is that of Large ribosomal subunit protein eL31 (RpL31) from Aedes aegypti (Yellowfever mosquito).